The sequence spans 86 residues: Sugar transporter SemiSWEET (86 aa).

The next 3 membrane-spanning stretches (helical) occupy residues 3–23 (PFLI…AYAP), 37–57 (ISLG…IYGL), and 61–81 (DAPL…ILVM). The 58-residue stretch at 6–63 (IKLIGFAAATCTTVAYAPQFIKVLKTRSARDISLGMFLVMVLGLALWLIYGLLSGDAP) folds into the PQ-loop domain.

In terms of assembly, homodimer. Homooligomer.

The protein localises to the cell membrane. Its function is as follows. Mediates sucrose transmembrane transport down a concentration gradient. The polypeptide is Sugar transporter SemiSWEET (Bradyrhizobium diazoefficiens (strain JCM 10833 / BCRC 13528 / IAM 13628 / NBRC 14792 / USDA 110)).